The chain runs to 278 residues: Indole-3-glycerol phosphate synthase (278 aa).

Belongs to the TrpC family.

It catalyses the reaction 1-(2-carboxyphenylamino)-1-deoxy-D-ribulose 5-phosphate + H(+) = (1S,2R)-1-C-(indol-3-yl)glycerol 3-phosphate + CO2 + H2O. It participates in amino-acid biosynthesis; L-tryptophan biosynthesis; L-tryptophan from chorismate: step 4/5. This Pseudomonas fluorescens (strain ATCC BAA-477 / NRRL B-23932 / Pf-5) protein is Indole-3-glycerol phosphate synthase.